Reading from the N-terminus, the 221-residue chain is Large ribosomal subunit protein bL25 (221 aa).

The segment at 174-221 (SVVTVVPPTDEPTEEEVEAMEGEAATEEPEVVGEEKEEDSEEENKDEE) is disordered. Residues 184–221 (EPTEEEVEAMEGEAATEEPEVVGEEKEEDSEEENKDEE) show a composition bias toward acidic residues.

Belongs to the bacterial ribosomal protein bL25 family. CTC subfamily. Part of the 50S ribosomal subunit; part of the 5S rRNA/L5/L18/L25 subcomplex. Contacts the 5S rRNA. Binds to the 5S rRNA independently of L5 and L18.

Functionally, this is one of the proteins that binds to the 5S RNA in the ribosome where it forms part of the central protuberance. The protein is Large ribosomal subunit protein bL25 of Staphylococcus haemolyticus (strain JCSC1435).